Consider the following 70-residue polypeptide: Melittin (70 aa).

The signal sequence occupies residues Met1–Ala21. The propeptide at Ala22–Ala43 is removed by a dipeptidylpeptidase. An N-formylglycine; partial modification is found at Gly44. At Gln69 the chain carries Glutamine amide.

The protein belongs to the melittin family. Monomer (in solution and for integration into membranes), homotetramer (in solution and potentially as a toroidal pore in membranes), and potenially homomultimer (as a toroidal pore in membranes). In terms of tissue distribution, expressed by the venom gland.

The protein resides in the secreted. Its subcellular location is the target cell membrane. Melittin: Main toxin of bee venom with strong antimicrobial activity and hemolytic activity. It has enhancing effects on bee venom phospholipase A2 activity. This amphipathic toxin binds to negatively charged membrane surface and forms pore by inserting into lipid bilayers inducing the leakage of ions and molecules and the enhancement of permeability that ultimately leads to cell lysis. It acts as a voltage-gated pore with higher selectivity for anions over cations. The ion conductance has been shown to be voltage-dependent. Self-association of melittin in membranes is promoted by high ionic strength, but not by the presence of negatively charged lipids. In vivo, intradermal injection into healthy human volunteers produce sharp pain sensation and an inflammatory response. It produces pain by activating primary nociceptor cells directly and indirectly due to its ability to activate plasma membrane phospholipase A2 and its pore-forming activity. In the context of inflammation and cancer tests, is highly cytotoxic to normal cells, highly induces calcium signaling and almost completely prevents cAMP production. In addition, prevents LPS-induced nitric oxid (NO) synthesis but does not affect the IP3 signaling and pro-inflammatory activation of endothelial cells. Also shows significant antiproliferative activity on the breast cancer cell line MDA-MB-231. Its function is as follows. Melittin-S: 1.4-fold less hemolytic and adopts a less organized secondary structure than melittin. In terms of biological role, melittin-2: Has strong hemolytic activity. The protein is Melittin (MELT) of Apis mellifera (Honeybee).